The sequence spans 349 residues: Phosphoribosylformylglycinamidine cyclo-ligase (349 aa).

This sequence belongs to the AIR synthase family.

It localises to the cytoplasm. It carries out the reaction 2-formamido-N(1)-(5-O-phospho-beta-D-ribosyl)acetamidine + ATP = 5-amino-1-(5-phospho-beta-D-ribosyl)imidazole + ADP + phosphate + H(+). It functions in the pathway purine metabolism; IMP biosynthesis via de novo pathway; 5-amino-1-(5-phospho-D-ribosyl)imidazole from N(2)-formyl-N(1)-(5-phospho-D-ribosyl)glycinamide: step 2/2. The polypeptide is Phosphoribosylformylglycinamidine cyclo-ligase (Listeria monocytogenes serotype 4b (strain CLIP80459)).